Reading from the N-terminus, the 101-residue chain is Interleukin-8 (101 aa).

Residues 1-22 (MPSQLRVAVLAAFLLSAVLCEG) form the signal peptide. 2 disulfides stabilise this stretch: Cys34–Cys61 and Cys36–Cys77.

This sequence belongs to the intercrine alpha (chemokine CxC) family. Homodimer. Interacts with TNFAIP6 (via Link domain); this interaction interferes with chemokine binding to glycosaminoglycans.

The protein localises to the secreted. In terms of biological role, chemotactic factor that mediates inflammatory response by attracting neutrophils, basophils, and T-cells to clear pathogens and protect the host from infection. Also plays an important role in neutrophil activation. Released in response to an inflammatory stimulus, exerts its effect by binding to the G-protein-coupled receptors CXCR1 and CXCR2, primarily found in neutrophils, monocytes and endothelial cells. G-protein heterotrimer (alpha, beta, gamma subunits) constitutively binds to CXCR1/CXCR2 receptor and activation by IL8 leads to beta and gamma subunits release from Galpha (GNAI2 in neutrophils) and activation of several downstream signaling pathways including PI3K and MAPK pathways. The chain is Interleukin-8 (CXCL8) from Cavia porcellus (Guinea pig).